The sequence spans 452 residues: Phosphatidate cytidylyltransferase, mitochondrial (452 aa).

Belongs to the TAM41 family. Requires Mg(2+) as cofactor.

The protein localises to the mitochondrion inner membrane. The catalysed reaction is a 1,2-diacyl-sn-glycero-3-phosphate + CTP + H(+) = a CDP-1,2-diacyl-sn-glycerol + diphosphate. The protein operates within phospholipid metabolism; CDP-diacylglycerol biosynthesis; CDP-diacylglycerol from sn-glycerol 3-phosphate: step 3/3. Functionally, catalyzes the conversion of phosphatidic acid (PA) to CDP-diacylglycerol (CDP-DAG), an essential intermediate in the synthesis of phosphatidylglycerol, cardiolipin and phosphatidylinositol. This chain is Phosphatidate cytidylyltransferase, mitochondrial (TAMM41), found in Homo sapiens (Human).